The primary structure comprises 95 residues: Acylphosphatase (95 aa).

The Acylphosphatase-like domain occupies 9-95; that stretch reads RLTAWVHGRV…KGGLTGFVER (87 aa). Residues Arg-24 and Asn-42 contribute to the active site.

The protein belongs to the acylphosphatase family.

It carries out the reaction an acyl phosphate + H2O = a carboxylate + phosphate + H(+). The polypeptide is Acylphosphatase (acyP) (Saccharopolyspora erythraea (strain ATCC 11635 / DSM 40517 / JCM 4748 / NBRC 13426 / NCIMB 8594 / NRRL 2338)).